Here is a 504-residue protein sequence, read N- to C-terminus: MSAKCIMVQGTSSSAGKSVMVAALCRIFSRRGYRVAPFKSQNMSLNSFTTAENREIAVAQVLQAEAAGIEPSHHMNPVLLKPKEDFTSQVIVHGRPAGNMNFQDYQTEFRDTALEAIRESLEYLKSRYELIVIEGAGSPAEINMRDRDLANMEIAHLADADVILVADIDRGGVFASIAGTLMLLDERDRSRIKGVVINKFRGNIDILMPGIERIEEITGVPVLGVLPYDEGLKLPEEDSASLSQRKYRGRGDIRVGVMRLPRISNFTDIDPLEYEEDVAVRLIETGDSLDDLDAIIIPGTRNTISDLIHLEENGFADEIRDLSREIPVFGICGGFQMLGKRILDDARQESSEGSVDGLGLLDCETHFTGEGKIISQSQGRVLGNGIFSGMRGETVEGYELHEGTTVLGDVKPLLRVDRGFGNTRSGGFDGAVDGNVAGTYFHGIFHNFRFRRYFTNLLRERKGIEPLEYLDDNFSASRRFSIDRLAEIVEENMDLSIIEEILEG.

One can recognise a GATase cobBQ-type domain in the interval 252–450 (DIRVGVMRLP…FHGIFHNFRF (199 aa)). Cysteine 332 functions as the Nucleophile in the catalytic mechanism. Histidine 442 is a catalytic residue.

It belongs to the CobB/CobQ family. CobQ subfamily.

It functions in the pathway cofactor biosynthesis; adenosylcobalamin biosynthesis. In terms of biological role, catalyzes amidations at positions B, D, E, and G on adenosylcobyrinic A,C-diamide. NH(2) groups are provided by glutamine, and one molecule of ATP is hydrogenolyzed for each amidation. The polypeptide is Probable cobyric acid synthase (cobQ) (Methanothermobacter thermautotrophicus (strain ATCC 29096 / DSM 1053 / JCM 10044 / NBRC 100330 / Delta H) (Methanobacterium thermoautotrophicum)).